An 818-amino-acid chain; its full sequence is BDNF/NT-3 growth factors receptor (818 aa).

An N-terminal signal peptide occupies residues 1 to 31 (MVSWRRRPGPGLARLWGLCCLVLGCWRGALG). Intrachain disulfides connect Cys32–Cys38 and Cys36–Cys45. Residues 32–426 (CPASCRCSSW…DVSNKENEDS (395 aa)) are Extracellular-facing. N-linked (GlcNAc...) asparagine glycosylation is present at Asn66. Residues 71–92 (YIANQRKLESINDNEVGFYVGL) form an LRR 1 repeat. N-linked (GlcNAc...) asparagine glycosylation is present at Asn94. Residues 95-116 (LTVVDSGLRFVSRQAFVKNINL) form an LRR 2 repeat. Asn120 carries N-linked (GlcNAc...) asparagine glycosylation. Disulfide bonds link Cys151–Cys175 and Cys153–Cys193. Positions 196–281 (PSANLSNYNI…GEVQTSAELT (86 aa)) constitute an Ig-like C2-type 1 domain. 7 N-linked (GlcNAc...) asparagine glycosylation sites follow: Asn199, Asn204, Asn226, Asn253, Asn287, Asn324, and Asn337. A disulfide bridge connects residues Cys217 and Cys265. The Ig-like C2-type 2 domain occupies 295-364 (TPDHHWCIPF…NGAYTLLAKN (70 aa)). Cys301 and Cys344 are oxidised to a cystine. Residues 384–394 (GSGPIVDPDVY) form a provides specificity for BDNF as ligand versus NTF3 and NTF4 region. Over residues 400-418 (PNDLGDTTNNSNQITSPDV) the composition is skewed to polar residues. The disordered stretch occupies residues 400 to 420 (PNDLGDTTNNSNQITSPDVSN). Asn408 carries N-linked (GlcNAc...) asparagine glycosylation. A helical transmembrane segment spans residues 427–450 (ITVYVVVGIAALVCTGLVIMLIIL). Over 451 to 818 (KFGRHSKFGM…ASPVYLDILG (368 aa)) the chain is Cytoplasmic. The interval 469-494 (NDDDSASPLHHISNGSNTPSSSEGGP) is disordered. Residues 481 to 491 (SNGSNTPSSSE) show a composition bias toward polar residues. Tyr512 bears the Phosphotyrosine; by autocatalysis mark. Positions 534 to 803 (IVLKRELGEG…LNIKEIHSLL (270 aa)) constitute a Protein kinase domain. ATP is bound by residues 540-548 (LGEGAFGKV) and Lys568. The Proton acceptor role is filled by Asp672. Phosphotyrosine; by autocatalysis occurs at positions 698, 702, 703, and 813.

The protein belongs to the protein kinase superfamily. Tyr protein kinase family. Insulin receptor subfamily. In terms of assembly, exists in a dynamic equilibrium between monomeric (low affinity) and dimeric (high affinity) structures. Interacts (phosphorylated upon activation by BDNF) with SHC1; mediates SHC1 phosphorylation and activation. Interacts (phosphorylated upon activation by BDNF) with PLCG1 and/or PLCG2; mediates PLCG1 phosphorylation and activation. Interacts with SH2B1 and SH2B2. Interacts with NGFR; may regulate the ligand specificity of the receptor. Interacts with SORCS2; this interaction is important for normal targeting to post-synaptic densities in response to high-frequency stimulation. Interacts (phosphorylated upon ligand-binding) with SH2D1A; regulates NTRK2. Interacts with SQSTM1 and KIDINS220. Interacts (phosphorylated upon ligand-binding) with FRS2; activates the MAPK signaling pathway. Interacts with APPL1. Interacts with MAPK8IP3/JIP3 and KLC1; interaction with KLC1 is mediated by MAPK8IP3/JIP3. Ligand-mediated auto-phosphorylation. As to expression, detected in embryonic brain and orsal root ganglia.

It is found in the cell membrane. The protein localises to the endosome membrane. It localises to the cell projection. The protein resides in the axon. Its subcellular location is the dendrite. It is found in the cytoplasm. The protein localises to the perinuclear region. It localises to the postsynaptic density. It carries out the reaction L-tyrosyl-[protein] + ATP = O-phospho-L-tyrosyl-[protein] + ADP + H(+). With respect to regulation, the neuronal activity and the influx of calcium positively regulate the kinase activity and the internalization of the receptor which are both important for active signaling. Regulated by NGFR that may control the internalization of the receptor. NGFR may also stimulate the activation by BDNF compared to NTF3 and NTF4. The formation of active receptors dimers able to fully transduce the ligand-mediated signal, may be negatively regulated by the formation of inactive heterodimers with the non-catalytic isoforms. Receptor tyrosine kinase involved in the development and the maturation of the central and the peripheral nervous systems through regulation of neuron survival, proliferation, migration, differentiation, and synapse formation and plasticity. Receptor for BDNF/brain-derived neurotrophic factor and NTF4/neurotrophin-4. Alternatively can also bind NTF3/neurotrophin-3 which is less efficient in activating the receptor but regulates neuron survival through NTRK2. Upon ligand-binding, undergoes homodimerization, autophosphorylation and activation. Recruits, phosphorylates and/or activates several downstream effectors including SHC1, FRS2, SH2B1, SH2B2 and PLCG1 that regulate distinct overlapping signaling cascades. Through SHC1, FRS2, SH2B1, SH2B2 activates the GRB2-Ras-MAPK cascade that regulates for instance neuronal differentiation including neurite outgrowth. Through the same effectors controls the Ras-PI3 kinase-AKT1 signaling cascade that mainly regulates growth and survival. Through PLCG1 and the downstream protein kinase C-regulated pathways controls synaptic plasticity. Thereby, plays a role in learning and memory by regulating both short term synaptic function and long-term potentiation. PLCG1 also leads to NF-Kappa-B activation and the transcription of genes involved in cell survival. Hence, it is able to suppress anoikis, the apoptosis resulting from loss of cell-matrix interactions. May also play a role in neutrophin-dependent calcium signaling in glial cells and mediate communication between neurons and glia. The sequence is that of BDNF/NT-3 growth factors receptor (NTRK2) from Gallus gallus (Chicken).